A 615-amino-acid chain; its full sequence is Zinc metalloproteinase-disintegrin-like (615 aa).

Positions 1–20 (MIQALLVTICLVGFPHQGSS) are cleaved as a signal peptide. A propeptide spanning residues 21–195 (IILESGNVKD…KMNFQSANNP (175 aa)) is cleaved from the precursor. Positions 204 to 400 (KYIKLAVVVD…DLPQCILNKP (197 aa)) constitute a Peptidase M12B domain. 3 disulfides stabilise this stretch: Cys-315/Cys-395, Cys-355/Cys-379, and Cys-357/Cys-362. Residue His-340 coordinates Zn(2+). Residue Glu-341 is part of the active site. Zn(2+)-binding residues include His-344 and His-350. Residues 408 to 494 (PAVCGNNFVE…DCPMDGLQRN (87 aa)) enclose the Disintegrin domain. 5 residues coordinate Ca(2+): Val-410, Asn-413, Phe-415, Glu-417, and Asp-423. 14 disulfides stabilise this stretch: Cys-411–Cys-440, Cys-422–Cys-435, Cys-424–Cys-430, Cys-434–Cys-457, Cys-448–Cys-454, Cys-453–Cys-479, Cys-466–Cys-486, Cys-473–Cys-505, Cys-498–Cys-510, Cys-517–Cys-567, Cys-532–Cys-576, Cys-545–Cys-555, Cys-562–Cys-602, and Cys-596–Cys-608. The D/ECD-tripeptide signature appears at 472–474 (DCD).

Belongs to the venom metalloproteinase (M12B) family. P-III subfamily. P-IIIa sub-subfamily. Monomer. Zn(2+) is required as a cofactor. Expressed by the venom gland.

The protein localises to the secreted. Its function is as follows. Snake venom zinc metalloprotease that may induce platelet aggregation. This is Zinc metalloproteinase-disintegrin-like from Cerberus rynchops (Dog-faced water snake).